Consider the following 481-residue polypeptide: MHSKTRLPQAFIDKMTGILPNQLKIEDFIAVCQRPLRRAIRVNTLKISVEKFQIRAQEQGWVLTAIPWCAEGFWIELQEEPTPLGNSAEHLGGLCYIQEASSMLPVAALFHFFTPTTQSIVLDAAAAPGSKTTQIAAKMNNSGLIIGNEFSSSRIKMLHANIQRCGIKNVALTHFDARVFGKWLPGTFDAILLDAPCSGEGTVRKDKYAMNNWSQSSINEIASTQQELILSAFHALKEDGILIYSTCTLSHEENQDICFFLKDKFPEHIEFLDLETLFTDAKKTRTAEGFLHIWPQVYDSEGFFVAAIKKTKACTVAPAVKRLGKFPFIRPTRQKEQALYEYFASQFAITNIKGMLYQRDQELWLFPDPIKPLIKELRFSRLGIKIAEEFGNGRKSGFKSTHEFVTCFGDSIDAHKLELSAEQAQEFYQGRDIRDIDAKGFKGEVLLSYRGHVIGLGKSLDNRIKNSLPRELIRDNNLFIK.

Residues 125–131, E149, D176, and D194 contribute to the S-adenosyl-L-methionine site; that span reads AAAPGSK. C247 functions as the Nucleophile in the catalytic mechanism.

It belongs to the class I-like SAM-binding methyltransferase superfamily. RsmB/NOP family.

Its subcellular location is the cytoplasm. It catalyses the reaction cytidine(1407) in 16S rRNA + S-adenosyl-L-methionine = 5-methylcytidine(1407) in 16S rRNA + S-adenosyl-L-homocysteine + H(+). In terms of biological role, specifically methylates the cytosine at position 1407 (m5C1407) of 16S rRNA. The protein is Ribosomal RNA small subunit methyltransferase F of Psychromonas ingrahamii (strain DSM 17664 / CCUG 51855 / 37).